A 1096-amino-acid chain; its full sequence is Protein EMBRYONIC FLOWER 1 (1096 aa).

8 disordered regions span residues 155–189 (KARG…EKLN), 274–296 (KTSG…VRGR), 315–348 (GATS…KGKQ), 366–420 (ETSQ…KKPV), 563–612 (LSRV…DIPM), 629–651 (DKEE…KNAL), 1007–1032 (DKEK…KNSS), and 1070–1096 (FKKK…TQNA). Short sequence motifs (nuclear localization signal) lie at residues 170–177 (SRKLVSPE) and 281–288 (IRKEESAL). Over residues 281–294 (IRKEESALKKESVR) the composition is skewed to basic and acidic residues. Over residues 315–337 (GATSENASKSCDSDQGNSESTDS) the composition is skewed to polar residues. A DNA-binding region spans residues 337–617 (SGFDRTPFKG…DDIPMEIVEL (281 aa)). A compositionally biased stretch (basic and acidic residues) spans 371-381 (GIKEHDADPSK). Residues 382 to 394 (RSTPAHSLFTGND) are compositionally biased toward polar residues. Residues 572-601 (SGADRKGKTVMVQEHHGAPRSQSHDRKETT) show a composition bias toward basic and acidic residues. The DNA-binding stretch occupies residues 866 to 1096 (LDPRLRSTTP…KPVCPPTQNA (231 aa)). The segment covering 1018–1032 (SCNNNASAGPVKNSS) has biased composition (polar residues). Positions 1071-1078 (KKKPAVCK) match the Nuclear localization signal 3 motif.

Interacts with MSI1. Expressed in mature embryo, root tips, cotyledons, leaves, stems, shoot apex, and flower clusters, with highest levels in flowers. The presence in the shoot apical meristem (SAM) is required to maintain vegetative development and prevent early flowering.

It localises to the nucleus. In terms of biological role, transcription repressor that regulates phase transition during shoot, flower and seeds development. Controls leaves development, shoot architecture and flowering by delaying both the vegetative to reproductive transition and flower initiation. Participates in polycomb group (PcG) protein complex-mediated (including EMF2) silencing of the flower homeotic genes AGAMOUS (AG), PISTILLATA (PI), and APETALA3 (AP3), as well as of some regulatory genes such as ABSCISIC ACID INSENSITIVE3 (ABI3), LONG VEGETATIVE PHASE1 (LOV1), and FLOWERING LOCUS C (FLC) during vegetative development. Required for histone methylation or for maintaining a stable histone methylation (e.g. H3K27me3) pattern of repressed target genes (including genes involved in salt stress response and flower development); this repression is counteracted by ULT1. Can bind non specifically DNA (both double- and single-stranded) and RNA. This is Protein EMBRYONIC FLOWER 1 from Arabidopsis thaliana (Mouse-ear cress).